Here is a 151-residue protein sequence, read N- to C-terminus: Ubiquitin-conjugating enzyme E2 2 (151 aa).

A UBC core domain is found at 4–150; it reads AARRRLMRDF…VRETVERSWE (147 aa). The Glycyl thioester intermediate role is filled by cysteine 88.

The protein belongs to the ubiquitin-conjugating enzyme family.

The protein localises to the cytoplasm. It is found in the nucleus. The catalysed reaction is S-ubiquitinyl-[E1 ubiquitin-activating enzyme]-L-cysteine + [E2 ubiquitin-conjugating enzyme]-L-cysteine = [E1 ubiquitin-activating enzyme]-L-cysteine + S-ubiquitinyl-[E2 ubiquitin-conjugating enzyme]-L-cysteine.. The protein operates within protein modification; protein ubiquitination. Catalyzes the covalent attachment of ubiquitin to other proteins. Plays a role in transcription regulation by catalyzing the monoubiquitination of histone H2B to form H2BK123ub1. H2BK123ub1 gives a specific tag for epigenetic transcriptional activation and is also a prerequisite for H3K4me and H3K79me formation. Also involved in postreplication repair of UV-damaged DNA, in N-end rule-dependent protein degradation and in sporulation. The protein is Ubiquitin-conjugating enzyme E2 2 (UBC2) of Trichoderma harzianum (Hypocrea lixii).